We begin with the raw amino-acid sequence, 420 residues long: Serine hydroxymethyltransferase (420 aa).

(6S)-5,6,7,8-tetrahydrofolate is bound by residues Leu121 and 125 to 127 (GHL). Lys230 carries the post-translational modification N6-(pyridoxal phosphate)lysine. Residues Glu246 and 354-356 (SPF) contribute to the (6S)-5,6,7,8-tetrahydrofolate site.

The protein belongs to the SHMT family. Homodimer. The cofactor is pyridoxal 5'-phosphate.

The protein localises to the cytoplasm. It catalyses the reaction (6R)-5,10-methylene-5,6,7,8-tetrahydrofolate + glycine + H2O = (6S)-5,6,7,8-tetrahydrofolate + L-serine. It participates in one-carbon metabolism; tetrahydrofolate interconversion. The protein operates within amino-acid biosynthesis; glycine biosynthesis; glycine from L-serine: step 1/1. In terms of biological role, catalyzes the reversible interconversion of serine and glycine with tetrahydrofolate (THF) serving as the one-carbon carrier. This reaction serves as the major source of one-carbon groups required for the biosynthesis of purines, thymidylate, methionine, and other important biomolecules. Also exhibits THF-independent aldolase activity toward beta-hydroxyamino acids, producing glycine and aldehydes, via a retro-aldol mechanism. This chain is Serine hydroxymethyltransferase, found in Rickettsia rickettsii (strain Iowa).